The chain runs to 288 residues: uncharacterized protein (288 aa).

The protein to M.bovis Mb1522c, M.leprae ML1804 and M.avium MAV321.

This is an uncharacterized protein from Mycobacterium tuberculosis (strain CDC 1551 / Oshkosh).